A 456-amino-acid chain; its full sequence is Alcohol acyltransferase 1 (456 aa).

Catalysis depends on proton acceptor residues His166 and Asp382.

This sequence belongs to the plant acyltransferase family. In terms of tissue distribution, expressed in fruit.

The enzyme catalyses 3-(methylsulfanyl)propanoyl-CoA + butan-1-ol = butyl 3-(methylsulfanyl)propanoate + CoA. The catalysed reaction is ethanol + benzoyl-CoA = ethyl benzoate + CoA. It catalyses the reaction butan-1-ol + benzoyl-CoA = butyl benzoate + CoA. It carries out the reaction 2-(methylsulfanyl)acetyl-CoA + butan-1-ol = butyl 2-(methylsulfanyl)acetate + CoA. Its function is as follows. Involved in the biosynthesis of volatile esters which confer kiwifruit flavor. Alcohol acyl transferase that can use a wide range of alcohols as substrate to produce esters. Exhibits benzoyl-CoA:alcohol O-acyltransferase activity. The sequence is that of Alcohol acyltransferase 1 from Actinidia deliciosa (Kiwi).